The primary structure comprises 341 residues: Methionine import ATP-binding protein MetN (341 aa).

Residues Ile6 to Leu247 enclose the ABC transporter domain. Gly44–Ser51 serves as a coordination point for ATP.

The protein belongs to the ABC transporter superfamily. Methionine importer (TC 3.A.1.24) family. The complex is composed of two ATP-binding proteins (MetN), two transmembrane proteins (MetI) and a solute-binding protein (MetQ).

Its subcellular location is the cell inner membrane. The catalysed reaction is L-methionine(out) + ATP + H2O = L-methionine(in) + ADP + phosphate + H(+). The enzyme catalyses D-methionine(out) + ATP + H2O = D-methionine(in) + ADP + phosphate + H(+). Functionally, part of the ABC transporter complex MetNIQ involved in methionine import. Responsible for energy coupling to the transport system. The sequence is that of Methionine import ATP-binding protein MetN from Protochlamydia amoebophila (strain UWE25).